We begin with the raw amino-acid sequence, 213 residues long: Probable elongation factor 1-beta/1-delta 1 (213 aa).

Belongs to the EF-1-beta/EF-1-delta family. EF-1 is composed of 4 subunits: alpha, beta, delta, and gamma.

Its function is as follows. EF-1-beta and EF-1-delta stimulate the exchange of GDP bound to EF-1-alpha to GTP. This Caenorhabditis elegans protein is Probable elongation factor 1-beta/1-delta 1 (eef-1B.1).